A 110-amino-acid chain; its full sequence is Parvalbumin alpha (110 aa).

S2 carries the N-acetylserine modification. S2, S8, and S24 each carry phosphoserine. 2 consecutive EF-hand domains span residues 39 to 74 (KSADDVKKVFHILDKDKSGFIEEDELGSILKGFSSD) and 78 to 110 (LSAKETKTLMAAGDKDGDGKIGVEEFSTLVAES). Residues D52, D54, S56, F58, E60, and E63 each contribute to the Ca(2+) site. S66 is modified (phosphoserine). Ca(2+) is bound by residues D91, D93, D95, K97, and E102.

Functionally, in muscle, parvalbumin is thought to be involved in relaxation after contraction. It binds two calcium ions. This Rattus norvegicus (Rat) protein is Parvalbumin alpha (Pvalb).